Reading from the N-terminus, the 260-residue chain is Cytochrome c oxidase subunit 3 (260 aa).

Helical transmembrane passes span 14–34 (PWPLTGAISALMMTSGLILWF), 41–61 (LLLAGTILLLLTVINWWRDVI), 81–101 (GMILFITSEVCFFFAFFWAFF), 126–146 (FLVPLLNTAVLLSSGVTVTWA), 158–178 (AIQGLFLTVILGIYFTGLQAW), 196–216 (FFVATGFHGLHVLIGTTFLFI), and 238–258 (AWYWHFVDVVWLFLYICICWW).

This sequence belongs to the cytochrome c oxidase subunit 3 family. In terms of assembly, component of the cytochrome c oxidase (complex IV, CIV), a multisubunit enzyme composed of a catalytic core of 3 subunits and several supernumerary subunits. The complex exists as a monomer or a dimer and forms supercomplexes (SCs) in the inner mitochondrial membrane with ubiquinol-cytochrome c oxidoreductase (cytochrome b-c1 complex, complex III, CIII).

The protein localises to the mitochondrion inner membrane. The enzyme catalyses 4 Fe(II)-[cytochrome c] + O2 + 8 H(+)(in) = 4 Fe(III)-[cytochrome c] + 2 H2O + 4 H(+)(out). Component of the cytochrome c oxidase, the last enzyme in the mitochondrial electron transport chain which drives oxidative phosphorylation. The respiratory chain contains 3 multisubunit complexes succinate dehydrogenase (complex II, CII), ubiquinol-cytochrome c oxidoreductase (cytochrome b-c1 complex, complex III, CIII) and cytochrome c oxidase (complex IV, CIV), that cooperate to transfer electrons derived from NADH and succinate to molecular oxygen, creating an electrochemical gradient over the inner membrane that drives transmembrane transport and the ATP synthase. Cytochrome c oxidase is the component of the respiratory chain that catalyzes the reduction of oxygen to water. Electrons originating from reduced cytochrome c in the intermembrane space (IMS) are transferred via the dinuclear copper A center (CU(A)) of subunit 2 and heme A of subunit 1 to the active site in subunit 1, a binuclear center (BNC) formed by heme A3 and copper B (CU(B)). The BNC reduces molecular oxygen to 2 water molecules using 4 electrons from cytochrome c in the IMS and 4 protons from the mitochondrial matrix. In Patiria pectinifera (Starfish), this protein is Cytochrome c oxidase subunit 3 (COIII).